The sequence spans 422 residues: Metallocarboxypeptidase A (422 aa).

Residues 1–17 (MRSVLSLALLAANVVTA) form the signal peptide. Positions 18–112 (AVVSPFDYSG…FEAYSAGYAP (95 aa)) are cleaved as a propeptide — activation peptide. The 301-residue stretch at 119–419 (SYHSYQDHIS…AGTVAMLKAV (301 aa)) folds into the Peptidase M14 domain. Positions 179 and 182 each coordinate Zn(2+). Substrate is bound by residues 179–182 (HARE), arginine 237, and 254–255 (NR). Cysteine 248 and cysteine 271 form a disulfide bridge. Histidine 309 is a Zn(2+) binding site. 310–311 (SY) contributes to the substrate binding site. Residue glutamate 385 is the Proton donor/acceptor of the active site.

Belongs to the peptidase M14 family. It depends on Zn(2+) as a cofactor.

The protein resides in the secreted. Its function is as follows. Extracellular metalloprotease that contributes to pathogenicity. The protein is Metallocarboxypeptidase A (MCPA) of Trichophyton equinum (Horse ringworm fungus).